The following is a 463-amino-acid chain: Na(+)/H(+) antiporter NhaA 3 (463 aa).

Helical transmembrane passes span 28–48, 79–99, 114–134, 144–164, 173–193, 196–216, 232–252, 305–325, 344–364, 377–397, and 413–433; these read FLAT…AALL, LHHW…GLEI, IAVP…IYFV, GWGI…ALFG, LFLL…VGIF, DHLN…ILGL, LVLW…GVLV, VLHP…NAGV, VAAA…VAAI, YGHL…SLFI, and IGIL…LRVL. The tract at residues 444–463 is disordered; sequence TDEPVPRLPPRPWRAPVPAK. Over residues 449–463 the composition is skewed to pro residues; that stretch reads PRLPPRPWRAPVPAK.

Belongs to the NhaA Na(+)/H(+) (TC 2.A.33) antiporter family.

It localises to the cell membrane. It catalyses the reaction Na(+)(in) + 2 H(+)(out) = Na(+)(out) + 2 H(+)(in). Na(+)/H(+) antiporter that extrudes sodium in exchange for external protons. This chain is Na(+)/H(+) antiporter NhaA 3, found in Frankia alni (strain DSM 45986 / CECT 9034 / ACN14a).